We begin with the raw amino-acid sequence, 263 residues long: Small ribosomal subunit protein eS4, Y isoform 1 (263 aa).

Residues 42–104 (LPLIIFLRNR…TGEHFRLVYD (63 aa)) form the S4 RNA-binding domain.

It belongs to the eukaryotic ribosomal protein eS4 family.

The sequence is that of Small ribosomal subunit protein eS4, Y isoform 1 (RPS4Y1) from Monodelphis domestica (Gray short-tailed opossum).